The sequence spans 460 residues: 5-hydroxytryptamine receptor 2C (460 aa).

Positions M1–A32 are cleaved as a signal peptide. Over I33–W56 the chain is Extracellular. Residues P57–M81 traverse the membrane as a helical segment. Over E82 to N87 the chain is Cytoplasmic. A helical transmembrane segment spans residues A88–L112. Residues L113–P129 are Extracellular-facing. An intrachain disulfide couples C128 to C208. Residues V130–D152 form a helical membrane-spanning segment. Position 140 (T140) interacts with ergotamine. The DRY motif; important for ligand-induced conformation changes motif lies at D152–Y154. The Cytoplasmic portion of the chain corresponds to R153–S168. A helical membrane pass occupies residues R169–I190. Residues P191–N214 lie on the Extracellular side of the membrane. N-linked (GlcNAc...) asparagine glycans are attached at residues N204 and N205. L210 lines the ergotamine pocket. A helical transmembrane segment spans residues F215–L237. Topologically, residues T238 to K313 are cytoplasmic. Residues E276 to T301 form a disordered region. The segment covering P289–R299 has biased composition (basic residues). The chain crosses the membrane as a helical span at residues V314 to L338. Cysteines 339 and 343 form a disulfide. At C339 to E349 the chain is on the extracellular side. Residues K350–L372 traverse the membrane as a helical segment. The short motif at N366 to Y370 is the NPxxY motif; important for ligand-induced conformation changes and signaling element. Over F373–V460 the chain is Cytoplasmic. The short motif at S458–V460 is the PDZ-binding element.

Belongs to the G-protein coupled receptor 1 family. Interacts with MPDZ. Interacts with ARRB2. Interacts with MPP3; this interaction stabilizes the receptor at the plasma membrane and prevents the desensitization of the HTR2C receptor-mediated calcium response.

The protein resides in the cell membrane. G-protein coupled receptor for 5-hydroxytryptamine (serotonin). Also functions as a receptor for various drugs and psychoactive substances, including ergot alkaloid derivatives, 1-2,5,-dimethoxy-4-iodophenyl-2-aminopropane (DOI) and lysergic acid diethylamide (LSD). Ligand binding causes a conformation change that triggers signaling via guanine nucleotide-binding proteins (G proteins) and modulates the activity of downstream effectors. HTR2C is coupled to G(q)/G(11) G alpha proteins and activates phospholipase C-beta, releasing diacylglycerol (DAG) and inositol 1,4,5-trisphosphate (IP3) second messengers that modulate the activity of phosphatidylinositol 3-kinase and promote the release of Ca(2+) ions from intracellular stores, respectively. Beta-arrestin family members inhibit signaling via G proteins and mediate activation of alternative signaling pathways. Regulates neuronal activity via the activation of short transient receptor potential calcium channels in the brain, and thereby modulates the activation of pro-opiomelanocortin neurons and the release of CRH that then regulates the release of corticosterone. Plays a role in the regulation of appetite and eating behavior, responses to anxiogenic stimuli and stress. Plays a role in insulin sensitivity and glucose homeostasis. This chain is 5-hydroxytryptamine receptor 2C, found in Rattus norvegicus (Rat).